The primary structure comprises 396 residues: MSRPQRISVLGATGSIGLSTLDVVQRHPDRYEAFALTGFSRLAELEALCLRHRPVYAVVPEQAAAIALQGSLAAAGIRTRVLFGEQALCEVASAPEVDMVMAAIVGAAGLPSTLAAVEAGKRVLLANKEALVMSGALFMQAVKRSGAVLLPIDSEHNAIFQSLPRNYADGLERVGVRRILLTASGGPFRETPLEQLASVTPEQACAHPNWSMGRKISVDSASMMNKGLELIEACWLFDAQPSQVEVVIHPQSVIHSMVDYVDGSVIAQLGNPDMRTPISYAMAWPERIDSGVSPLDMFAVGRLDFQRPDEQRFPCLRLASQAAETGGSAPAMLNAANEVAVAAFLERRIRFSDIAVIIEDVLNREAVTAVESLDQVLAADRRARSVAGQWLTRHAG.

Residues Thr13, Gly14, Ser15, Ile16, and Asn127 each contribute to the NADPH site. Lys128 is a binding site for 1-deoxy-D-xylulose 5-phosphate. Position 129 (Glu129) interacts with NADPH. A Mn(2+)-binding site is contributed by Asp153. 4 residues coordinate 1-deoxy-D-xylulose 5-phosphate: Ser154, Glu155, Ser184, and His207. Glu155 serves as a coordination point for Mn(2+). Gly213 provides a ligand contact to NADPH. 1-deoxy-D-xylulose 5-phosphate-binding residues include Ser220, Asn225, Lys226, and Glu229. Glu229 serves as a coordination point for Mn(2+).

This sequence belongs to the DXR family. It depends on Mg(2+) as a cofactor. The cofactor is Mn(2+).

It carries out the reaction 2-C-methyl-D-erythritol 4-phosphate + NADP(+) = 1-deoxy-D-xylulose 5-phosphate + NADPH + H(+). Its pathway is isoprenoid biosynthesis; isopentenyl diphosphate biosynthesis via DXP pathway; isopentenyl diphosphate from 1-deoxy-D-xylulose 5-phosphate: step 1/6. In terms of biological role, catalyzes the NADPH-dependent rearrangement and reduction of 1-deoxy-D-xylulose-5-phosphate (DXP) to 2-C-methyl-D-erythritol 4-phosphate (MEP). This chain is 1-deoxy-D-xylulose 5-phosphate reductoisomerase, found in Pseudomonas aeruginosa (strain UCBPP-PA14).